Here is a 445-residue protein sequence, read N- to C-terminus: Scarecrow-like protein 18 (445 aa).

The segment covering 1–21 (MLTSFKSSSSSSEDATATTTE) has biased composition (low complexity). Residues 1 to 26 (MLTSFKSSSSSSEDATATTTENPPPL) are disordered. The GRAS domain occupies 32–445 (SAATSASHHL…RPLFSVSSWK (414 aa)). Residues 39-127 (HHLRRLLFTA…STVFTSSVCK (89 aa)) form a leucine repeat I (LRI) region. The tract at residues 146 to 217 (YLWLNQLTPF…SPPPSLRITG (72 aa)) is VHIID. The VHIID motif lies at 179–183 (LHILD). The segment at 227 to 259 (RTGDRLTRFADSLGLQFQFHTLVIVEEDLAGLL) is leucine repeat II (LRII). Residues 275-366 (IAVNCVHFLH…QRWFGKEILD (92 aa)) form a PFYRE region. An SAW region spans residues 369–445 (AAEETERKQR…RPLFSVSSWK (77 aa)).

This sequence belongs to the GRAS family. As to expression, expressed in roots and flowers.

It is found in the nucleus. Functionally, probable transcription factor required for axillary (lateral) shoot meristem formation during vegetative development. Seems to act upstream of REVOLUTA. The chain is Scarecrow-like protein 18 (SCL18) from Arabidopsis thaliana (Mouse-ear cress).